A 396-amino-acid polypeptide reads, in one-letter code: Elongation factor Tu (396 aa).

One can recognise a tr-type G domain in the interval 10–206 (KPHVNVGTIG…TMDSYIPEPV (197 aa)). Positions 19 to 26 (GHVDHGKT) are G1. Position 19 to 26 (19 to 26 (GHVDHGKT)) interacts with GTP. Residue Thr26 coordinates Mg(2+). Residues 60-64 (GITIS) are G2. The tract at residues 81–84 (DCPG) is G3. GTP is bound by residues 81-85 (DCPGH) and 136-139 (NKAD). The segment at 136-139 (NKAD) is G4. The G5 stretch occupies residues 174 to 176 (SAL).

The protein belongs to the TRAFAC class translation factor GTPase superfamily. Classic translation factor GTPase family. EF-Tu/EF-1A subfamily. In terms of assembly, monomer.

The protein resides in the cytoplasm. The enzyme catalyses GTP + H2O = GDP + phosphate + H(+). GTP hydrolase that promotes the GTP-dependent binding of aminoacyl-tRNA to the A-site of ribosomes during protein biosynthesis. This chain is Elongation factor Tu, found in Legionella pneumophila (strain Paris).